A 737-amino-acid chain; its full sequence is Translation initiation factor IF-2 (737 aa).

The tract at residues 55–152 is disordered; the sequence is KKKEHIQHNK…PVPPRKNKPL (98 aa). Positions 60–70 are enriched in basic and acidic residues; that stretch reads IQHNKNKDNFH. A compositionally biased stretch (basic residues) spans 88-98; that stretch reads KNVHKNNRKRS. Residues 105–121 show a composition bias toward low complexity; sequence NNNAKNGQRNNRNNRSN. The segment covering 122–131 has biased composition (basic residues); the sequence is NKFKNKRNNN. Residues 132–142 are compositionally biased toward low complexity; sequence NKRNNNFKKGN. Residues 238-407 form the tr-type G domain; sequence KRPPVVTIMG…LLEAEMLELH (170 aa). The G1 stretch occupies residues 247 to 254; that stretch reads GHVDHGKT. 247–254 serves as a coordination point for GTP; that stretch reads GHVDHGKT. The tract at residues 272 to 276 is G2; sequence GITQH. A G3 region spans residues 293–296; that stretch reads DTPG. Residues 293 to 297 and 347 to 350 contribute to the GTP site; these read DTPGH and NKID. The G4 stretch occupies residues 347 to 350; sequence NKID. Residues 383–385 form a G5 region; it reads SAK.

It belongs to the TRAFAC class translation factor GTPase superfamily. Classic translation factor GTPase family. IF-2 subfamily.

The protein resides in the cytoplasm. One of the essential components for the initiation of protein synthesis. Protects formylmethionyl-tRNA from spontaneous hydrolysis and promotes its binding to the 30S ribosomal subunits. Also involved in the hydrolysis of GTP during the formation of the 70S ribosomal complex. The protein is Translation initiation factor IF-2 of Ligilactobacillus salivarius (strain UCC118) (Lactobacillus salivarius).